Here is a 231-residue protein sequence, read N- to C-terminus: L-ribulose-5-phosphate 4-epimerase (231 aa).

Residues 27–28 (GN), 44–45 (SG), and 74–75 (SS) contribute to the substrate site. Positions 76, 95, and 97 each coordinate Zn(2+). Residue Asp120 is the Proton donor/acceptor of the active site. Residue His171 participates in Zn(2+) binding. The Proton donor/acceptor role is filled by Tyr229.

This sequence belongs to the aldolase class II family. AraD/FucA subfamily. Homotetramer. Zn(2+) serves as cofactor.

It catalyses the reaction L-ribulose 5-phosphate = D-xylulose 5-phosphate. The protein operates within carbohydrate degradation; L-arabinose degradation via L-ribulose; D-xylulose 5-phosphate from L-arabinose (bacterial route): step 3/3. In terms of biological role, involved in the degradation of L-arabinose. Catalyzes the interconversion of L-ribulose 5-phosphate (LRu5P) and D-xylulose 5-phosphate (D-Xu5P) via a retroaldol/aldol mechanism (carbon-carbon bond cleavage analogous to a class II aldolase reaction). This chain is L-ribulose-5-phosphate 4-epimerase, found in Salmonella typhimurium (strain LT2 / SGSC1412 / ATCC 700720).